A 113-amino-acid chain; its full sequence is uncharacterized protein (113 aa).

It is found in the cytoplasm. It localises to the nucleus. This is an uncharacterized protein from Saccharomyces cerevisiae (strain ATCC 204508 / S288c) (Baker's yeast).